The primary structure comprises 333 residues: Casein kinase II subunit alpha-2 (333 aa).

Residues 34-319 (YEVVRKVGRG…AREAMAHPYF (286 aa)) form the Protein kinase domain. Residues 40–48 (VGRGKYSEV) and Lys63 each bind ATP. Catalysis depends on Asp151, which acts as the Proton acceptor.

The protein belongs to the protein kinase superfamily. Ser/Thr protein kinase family. CK2 subfamily. In terms of assembly, monomer. In terms of processing, autophosphorylated.

Its subcellular location is the cytoplasm. The catalysed reaction is L-seryl-[protein] + ATP = O-phospho-L-seryl-[protein] + ADP + H(+). It catalyses the reaction L-threonyl-[protein] + ATP = O-phospho-L-threonyl-[protein] + ADP + H(+). In terms of biological role, casein kinases are operationally defined by their preferential utilization of acidic proteins such as caseins as substrates. It can phosphorylate a large number of proteins. Involved in photoperiod sensitivity (PS). Increases days-to-heading under natural day (ND) and long day (LD) conditions, but not under short day (SD) conditions. The chain is Casein kinase II subunit alpha-2 from Oryza sativa subsp. indica (Rice).